The primary structure comprises 64 residues: MPKNKTHSGASKRFRVTGSGKILREKAGKRHNLEKKASKVTRRMTGTTELAKADVKRAKKMLGL.

Residues 1 to 15 (MPKNKTHSGASKRFR) are compositionally biased toward basic residues. Residues 1 to 20 (MPKNKTHSGASKRFRVTGSG) form a disordered region.

This sequence belongs to the bacterial ribosomal protein bL35 family.

The sequence is that of Large ribosomal subunit protein bL35 from Nocardioides sp. (strain ATCC BAA-499 / JS614).